A 325-amino-acid chain; its full sequence is Aldo-keto reductase family 1 member A1 (325 aa).

Alanine 2 is subject to N-acetylalanine. Residue serine 4 is modified to Phosphoserine. NADP(+)-binding positions include 11–20, threonine 21, and tryptophan 22; that span reads GQKMPLIGLG. Residue serine 38 is modified to Phosphoserine. Aspartate 45 contributes to the NADP(+) binding site. The Proton donor role is filled by tyrosine 50. N6-acetyllysine; alternate is present on lysine 127. An N6-succinyllysine; alternate modification is found at lysine 127. NADP(+) is bound by residues serine 162, asparagine 163, serine 211, leucine 213, serine 215, serine 216, lysine 263, serine 264, valine 265, threonine 266, arginine 269, and asparagine 273. At serine 211 the chain carries Phosphoserine.

This sequence belongs to the aldo/keto reductase family. In terms of assembly, monomer.

It is found in the cytoplasm. The protein localises to the cytosol. Its subcellular location is the apical cell membrane. It carries out the reaction a primary alcohol + NADP(+) = an aldehyde + NADPH + H(+). The catalysed reaction is L-gulonate + NADP(+) = aldehydo-D-glucuronate + NADPH + H(+). It catalyses the reaction L-gulono-1,4-lactone + NADP(+) = D-glucurono-3,6-lactone + NADPH + H(+). The enzyme catalyses allyl alcohol + NADP(+) = acrolein + NADPH + H(+). It carries out the reaction glycerol + NADP(+) = D-glyceraldehyde + NADPH + H(+). The catalysed reaction is glycerol + NADP(+) = L-glyceraldehyde + NADPH + H(+). It catalyses the reaction hydroxyacetone + NADP(+) = methylglyoxal + NADPH + H(+). The enzyme catalyses 3-deoxyfructose + NADP(+) = 3-deoxyglucosone + NADPH + H(+). It carries out the reaction (R)-mevalonate + NADP(+) = (R)-mevaldate + NADPH + H(+). The catalysed reaction is pyridine 3-methanol + NADP(+) = pyridine-3-carbaldehyde + NADPH + H(+). It catalyses the reaction S-nitroso-CoA + NADPH + H(+) = sulfinamide-CoA + NADP(+). The enzyme catalyses S-nitrosoglutathione + NADPH + H(+) = S-(hydroxysulfenamide)glutathione + NADP(+). In terms of biological role, catalyzes the NADPH-dependent reduction of a wide variety of carbonyl-containing compounds to their corresponding alcohols. Displays enzymatic activity towards endogenous metabolites such as aromatic and aliphatic aldehydes, ketones, monosaccharides and bile acids, with a preference for negatively charged substrates, such as glucuronate and succinic semialdehyde. Plays an important role in ascorbic acid biosynthesis by catalyzing the reduction of D-glucuronic acid and D-glucurono-gamma-lactone. Functions as a detoxifiying enzyme by reducing a range of toxic aldehydes. Reduces methylglyoxal and 3-deoxyglucosone, which are present at elevated levels under hyperglycemic conditions and are cytotoxic. Involved also in the detoxification of lipid-derived aldehydes like acrolein. Plays a role in the activation of procarcinogens, such as polycyclic aromatic hydrocarbon trans-dihydrodiols, and in the metabolism of various xenobiotics and drugs. Also acts as an inhibitor of protein S-nitrosylation by mediating degradation of S-nitroso-coenzyme A (S-nitroso-CoA), a cofactor required to S-nitrosylate proteins. S-nitroso-CoA reductase activity is involved in reprogramming intermediary metabolism in renal proximal tubules, notably by inhibiting protein S-nitrosylation of isoform 2 of PKM (PKM2). Also acts as a S-nitroso-glutathione reductase by catalyzing the NADPH-dependent reduction of S-nitrosoglutathione. Displays no reductase activity towards retinoids. In Bos taurus (Bovine), this protein is Aldo-keto reductase family 1 member A1.